We begin with the raw amino-acid sequence, 264 residues long: Acyl-[acyl-carrier-protein]--UDP-N-acetylglucosamine O-acyltransferase (264 aa).

This sequence belongs to the transferase hexapeptide repeat family. LpxA subfamily. In terms of assembly, homotrimer.

The protein localises to the cytoplasm. The catalysed reaction is a (3R)-hydroxyacyl-[ACP] + UDP-N-acetyl-alpha-D-glucosamine = a UDP-3-O-[(3R)-3-hydroxyacyl]-N-acetyl-alpha-D-glucosamine + holo-[ACP]. It participates in glycolipid biosynthesis; lipid IV(A) biosynthesis; lipid IV(A) from (3R)-3-hydroxytetradecanoyl-[acyl-carrier-protein] and UDP-N-acetyl-alpha-D-glucosamine: step 1/6. Its function is as follows. Involved in the biosynthesis of lipid A, a phosphorylated glycolipid that anchors the lipopolysaccharide to the outer membrane of the cell. In Actinobacillus pleuropneumoniae serotype 7 (strain AP76), this protein is Acyl-[acyl-carrier-protein]--UDP-N-acetylglucosamine O-acyltransferase.